The following is a 135-amino-acid chain: Large ribosomal subunit protein uL16c (135 aa).

This sequence belongs to the universal ribosomal protein uL16 family. In terms of assembly, part of the 50S ribosomal subunit.

Its subcellular location is the plastid. It localises to the chloroplast. This Gossypium barbadense (Sea Island cotton) protein is Large ribosomal subunit protein uL16c.